Consider the following 1574-residue polypeptide: Centrosomal protein of 170 kDa protein B (1574 aa).

In terms of domain architecture, FHA spans 23–73 (IFVGRDECELMLQSRSVDKQHAVINYDQDRDEHWVKDLGSLNGTFVNDVRI). 3 disordered regions span residues 121 to 258 (VSVK…GVGG), 316 to 395 (DWLV…RDPQ), and 409 to 578 (FDGD…QDQE). Composition is skewed to basic and acidic residues over residues 147–157 (RPEKGDRRHGA), 182–197 (SEDR…RPKD), and 325–344 (LLRR…DLPV). Phosphoserine is present on Ser360. Residues 370–382 (ASVSGASAEASGE) are compositionally biased toward low complexity. Ser421 carries the post-translational modification Phosphoserine. A compositionally biased stretch (basic and acidic residues) spans 430–446 (PKADKRRGPGTSDRDRP). Positions 452-463 (ATGSSSGPQRAS) are enriched in polar residues. Positions 465 to 474 (LKREKTEERL) are enriched in basic and acidic residues. A compositionally biased stretch (polar residues) spans 475–488 (GNTSPVPRASTRSF). Phosphoserine is present on residues Ser478 and Ser490. Residues 518 to 528 (EKTPPVLPAPL) show a composition bias toward pro residues. Residue Ser534 is modified to Phosphoserine. Phosphothreonine occurs at positions 540 and 541. 10 positions are modified to phosphoserine: Ser595, Ser617, Ser653, Ser709, Ser744, Ser746, Ser749, Ser751, Ser819, and Ser843. Disordered regions lie at residues 637-826 (PGMA…RDGL), 839-882 (RSGR…HISS), 924-1300 (SKSA…DPYG), 1333-1358 (AGDG…NTPA), 1377-1407 (NFQK…TNKT), and 1510-1535 (NRAP…TSPA). Residues 857–867 (FARQESFTKEP) are compositionally biased toward polar residues. Ser947 carries the post-translational modification Phosphoserine. The segment covering 950-959 (DTASTISLLS) has biased composition (polar residues). Ser965 and Ser981 each carry phosphoserine. The span at 996-1005 (ARERMSERQH) shows a compositional bias: basic and acidic residues. Residues 1084-1102 (RSSATAQKVQQALTRSNSL) are compositionally biased toward polar residues. Ser1122 carries the post-translational modification Phosphoserine. Residues 1134-1146 (AANPEPANRAAPE) are compositionally biased toward low complexity. Ser1166 and Ser1186 each carry phosphoserine. The span at 1199 to 1213 (AEARAAAKKAAATAA) shows a compositional bias: low complexity. Positions 1265–1282 (HASTATQTPRGSSSTRAR) are enriched in polar residues. Residue Thr1289 is modified to Phosphothreonine. Ser1341 bears the Phosphoserine mark. Composition is skewed to polar residues over residues 1344–1358 (PTRS…NTPA) and 1385–1396 (SMNSHNLDQNMN). Position 1345 is a phosphothreonine (Thr1345). Ser1347 is modified (phosphoserine). Residues Ser1530 and Ser1533 each carry the phosphoserine modification.

Belongs to the CEP170 family.

It is found in the cytoplasm. It localises to the cytoskeleton. Its function is as follows. Plays a role in microtubule organization. The polypeptide is Centrosomal protein of 170 kDa protein B (Cep170b) (Mus musculus (Mouse)).